Consider the following 282-residue polypeptide: NADPH-dependent 7-cyano-7-deazaguanine reductase (282 aa).

Position 88–90 (88–90) interacts with substrate; sequence IES. Residue 90 to 91 coordinates NADPH; the sequence is SK. Cys-190 serves as the catalytic Thioimide intermediate. Catalysis depends on Asp-197, which acts as the Proton donor. 229–230 is a substrate binding site; the sequence is HE. 258-259 is an NADPH binding site; the sequence is RG.

This sequence belongs to the GTP cyclohydrolase I family. QueF type 2 subfamily. Homodimer.

The protein resides in the cytoplasm. The catalysed reaction is 7-aminomethyl-7-carbaguanine + 2 NADP(+) = 7-cyano-7-deazaguanine + 2 NADPH + 3 H(+). Its pathway is tRNA modification; tRNA-queuosine biosynthesis. Catalyzes the NADPH-dependent reduction of 7-cyano-7-deazaguanine (preQ0) to 7-aminomethyl-7-deazaguanine (preQ1). The polypeptide is NADPH-dependent 7-cyano-7-deazaguanine reductase (Escherichia coli (strain K12 / MC4100 / BW2952)).